A 116-amino-acid chain; its full sequence is Large ribosomal subunit protein uL22c (116 aa).

This sequence belongs to the universal ribosomal protein uL22 family. Part of the 50S ribosomal subunit.

It is found in the plastid. Its subcellular location is the chloroplast. Functionally, this protein binds specifically to 23S rRNA. In terms of biological role, the globular domain of the protein is located near the polypeptide exit tunnel on the outside of the subunit, while an extended beta-hairpin is found that lines the wall of the exit tunnel in the center of the 70S ribosome. The polypeptide is Large ribosomal subunit protein uL22c (rpl22) (Porphyra purpurea (Red seaweed)).